Reading from the N-terminus, the 187-residue chain is Probable chorismate pyruvate-lyase (187 aa).

Residues arginine 80, leucine 117, and glutamate 176 each coordinate substrate.

Belongs to the UbiC family.

The protein localises to the cytoplasm. The catalysed reaction is chorismate = 4-hydroxybenzoate + pyruvate. It participates in cofactor biosynthesis; ubiquinone biosynthesis. Functionally, removes the pyruvyl group from chorismate, with concomitant aromatization of the ring, to provide 4-hydroxybenzoate (4HB) for the ubiquinone pathway. The polypeptide is Probable chorismate pyruvate-lyase (Halorhodospira halophila (strain DSM 244 / SL1) (Ectothiorhodospira halophila (strain DSM 244 / SL1))).